The sequence spans 374 residues: Quinolinate synthase (374 aa).

Residues histidine 53 and serine 70 each contribute to the iminosuccinate site. Position 116 (cysteine 116) interacts with [4Fe-4S] cluster. Residues 148–150 and serine 169 contribute to the iminosuccinate site; that span reads YMN. Cysteine 236 contributes to the [4Fe-4S] cluster binding site. Iminosuccinate-binding positions include 262 to 264 and threonine 279; that span reads HPE. [4Fe-4S] cluster is bound at residue cysteine 327.

This sequence belongs to the quinolinate synthase family. Type 3 subfamily. The cofactor is [4Fe-4S] cluster.

It is found in the cytoplasm. It catalyses the reaction iminosuccinate + dihydroxyacetone phosphate = quinolinate + phosphate + 2 H2O + H(+). Its pathway is cofactor biosynthesis; NAD(+) biosynthesis; quinolinate from iminoaspartate: step 1/1. Functionally, catalyzes the condensation of iminoaspartate with dihydroxyacetone phosphate to form quinolinate. In Halobacterium salinarum (strain ATCC 29341 / DSM 671 / R1), this protein is Quinolinate synthase.